A 335-amino-acid polypeptide reads, in one-letter code: Glyceraldehyde-3-phosphate dehydrogenase (335 aa).

NAD(+) contacts are provided by residues 12-13, D34, and K79; that span reads RI. D-glyceraldehyde 3-phosphate-binding positions include 150–152, T181, 210–211, and R233; these read SCT and TG. The active-site Nucleophile is C151. Residue N315 participates in NAD(+) binding.

Belongs to the glyceraldehyde-3-phosphate dehydrogenase family. In terms of assembly, homotetramer.

Its subcellular location is the cytoplasm. The enzyme catalyses D-glyceraldehyde 3-phosphate + phosphate + NAD(+) = (2R)-3-phospho-glyceroyl phosphate + NADH + H(+). It functions in the pathway carbohydrate degradation; glycolysis; pyruvate from D-glyceraldehyde 3-phosphate: step 1/5. The protein is Glyceraldehyde-3-phosphate dehydrogenase (GPD) of Debaryomyces hansenii (strain ATCC 36239 / CBS 767 / BCRC 21394 / JCM 1990 / NBRC 0083 / IGC 2968) (Yeast).